Consider the following 361-residue polypeptide: tRNA/tmRNA (uracil-C(5))-methyltransferase (361 aa).

Residues Gln-185, Tyr-213, Asn-218, Glu-234, and Asp-294 each coordinate S-adenosyl-L-methionine. Catalysis depends on Cys-319, which acts as the Nucleophile. The active-site Proton acceptor is Glu-353.

This sequence belongs to the class I-like SAM-binding methyltransferase superfamily. RNA M5U methyltransferase family. TrmA subfamily.

The enzyme catalyses uridine(54) in tRNA + S-adenosyl-L-methionine = 5-methyluridine(54) in tRNA + S-adenosyl-L-homocysteine + H(+). It carries out the reaction uridine(341) in tmRNA + S-adenosyl-L-methionine = 5-methyluridine(341) in tmRNA + S-adenosyl-L-homocysteine + H(+). Its function is as follows. Dual-specificity methyltransferase that catalyzes the formation of 5-methyluridine at position 54 (m5U54) in all tRNAs, and that of position 341 (m5U341) in tmRNA (transfer-mRNA). This chain is tRNA/tmRNA (uracil-C(5))-methyltransferase, found in Pseudomonas putida (strain ATCC 47054 / DSM 6125 / CFBP 8728 / NCIMB 11950 / KT2440).